The following is a 208-amino-acid chain: ATP synthase subunit beta, chloroplastic (208 aa).

Belongs to the ATPase alpha/beta chains family. F-type ATPases have 2 components, CF(1) - the catalytic core - and CF(0) - the membrane proton channel. CF(1) has five subunits: alpha(3), beta(3), gamma(1), delta(1), epsilon(1). CF(0) has four main subunits: a(1), b(1), b'(1) and c(9-12).

The protein resides in the plastid. Its subcellular location is the chloroplast thylakoid membrane. The catalysed reaction is ATP + H2O + 4 H(+)(in) = ADP + phosphate + 5 H(+)(out). Functionally, produces ATP from ADP in the presence of a proton gradient across the membrane. The catalytic sites are hosted primarily by the beta subunits. This chain is ATP synthase subunit beta, chloroplastic (atpB), found in Hypolepis hostilis (Fern).